A 283-amino-acid polypeptide reads, in one-letter code: NAD kinase (283 aa).

D68 serves as the catalytic Proton acceptor. Residues 68–69, 142–143, R153, D172, 183–188, and Q242 contribute to the NAD(+) site; these read DG, ND, and TAYSLS.

The protein belongs to the NAD kinase family. A divalent metal cation serves as cofactor.

The protein localises to the cytoplasm. The catalysed reaction is NAD(+) + ATP = ADP + NADP(+) + H(+). In terms of biological role, involved in the regulation of the intracellular balance of NAD and NADP, and is a key enzyme in the biosynthesis of NADP. Catalyzes specifically the phosphorylation on 2'-hydroxyl of the adenosine moiety of NAD to yield NADP. The protein is NAD kinase of Caldanaerobacter subterraneus subsp. tengcongensis (strain DSM 15242 / JCM 11007 / NBRC 100824 / MB4) (Thermoanaerobacter tengcongensis).